The primary structure comprises 281 residues: ATP phosphoribosyltransferase (281 aa).

It belongs to the ATP phosphoribosyltransferase family. Long subfamily. Mg(2+) serves as cofactor.

Its subcellular location is the cytoplasm. It carries out the reaction 1-(5-phospho-beta-D-ribosyl)-ATP + diphosphate = 5-phospho-alpha-D-ribose 1-diphosphate + ATP. Its pathway is amino-acid biosynthesis; L-histidine biosynthesis; L-histidine from 5-phospho-alpha-D-ribose 1-diphosphate: step 1/9. Feedback inhibited by histidine. Catalyzes the condensation of ATP and 5-phosphoribose 1-diphosphate to form N'-(5'-phosphoribosyl)-ATP (PR-ATP). Has a crucial role in the pathway because the rate of histidine biosynthesis seems to be controlled primarily by regulation of HisG enzymatic activity. The sequence is that of ATP phosphoribosyltransferase from Natronomonas pharaonis (strain ATCC 35678 / DSM 2160 / CIP 103997 / JCM 8858 / NBRC 14720 / NCIMB 2260 / Gabara) (Halobacterium pharaonis).